Consider the following 204-residue polypeptide: uncharacterized protein (204 aa).

Residues 109–136 (QFDIDVHKDQIEKLKDLYKALLRIAETT) are a coiled coil.

This is an uncharacterized protein from Bacillus subtilis (strain 168).